Reading from the N-terminus, the 337-residue chain is Ketol-acid reductoisomerase (NADP(+)) (337 aa).

Residues Leu-3–Thr-183 enclose the KARI N-terminal Rossmann domain. NADP(+)-binding positions include Tyr-26–Gln-29, Lys-49, Ser-52, Ser-54, and Asp-84–Gln-87. His-109 is a catalytic residue. Gly-135 serves as a coordination point for NADP(+). The 146-residue stretch at Thr-184–Val-329 folds into the KARI C-terminal knotted domain. Residues Asp-192, Glu-196, Glu-228, and Glu-232 each coordinate Mg(2+). Ser-253 contributes to the substrate binding site.

It belongs to the ketol-acid reductoisomerase family. The cofactor is Mg(2+).

The enzyme catalyses (2R)-2,3-dihydroxy-3-methylbutanoate + NADP(+) = (2S)-2-acetolactate + NADPH + H(+). The catalysed reaction is (2R,3R)-2,3-dihydroxy-3-methylpentanoate + NADP(+) = (S)-2-ethyl-2-hydroxy-3-oxobutanoate + NADPH + H(+). It participates in amino-acid biosynthesis; L-isoleucine biosynthesis; L-isoleucine from 2-oxobutanoate: step 2/4. The protein operates within amino-acid biosynthesis; L-valine biosynthesis; L-valine from pyruvate: step 2/4. Its function is as follows. Involved in the biosynthesis of branched-chain amino acids (BCAA). Catalyzes an alkyl-migration followed by a ketol-acid reduction of (S)-2-acetolactate (S2AL) to yield (R)-2,3-dihydroxy-isovalerate. In the isomerase reaction, S2AL is rearranged via a Mg-dependent methyl migration to produce 3-hydroxy-3-methyl-2-ketobutyrate (HMKB). In the reductase reaction, this 2-ketoacid undergoes a metal-dependent reduction by NADPH to yield (R)-2,3-dihydroxy-isovalerate. This is Ketol-acid reductoisomerase (NADP(+)) from Mycobacterium bovis (strain BCG / Pasteur 1173P2).